Reading from the N-terminus, the 105-residue chain is DNA-binding transcriptional regulator BolA (105 aa).

Belongs to the BolA/IbaG family.

Its function is as follows. Transcriptional regulator that plays an important role in general stress response. Has many effects on cell morphology, cell growth and cell division. Acts by regulating the transcription of many genes, including dacA (PBP-5), dacC (PBP-6), ampC and mreB. Probably involved in the coordination of genes that adapt the cell physiology in order to enhance cell adaptation and survival under stress conditions. Essential for normal cell morphology in stationary phase and under conditions of starvation. Also regulates a complex network of genes encoding proteins related to biofilm development, and negatively modulates flagellar biosynthesis and swimming capacity. Could be a motile/adhesive transcriptional switch, specifically involved in the transition between the planktonic and the attachment stage of biofilm formation. Overexpression produces round cell shape, impairs cell growth rate and induces biofilm development. The sequence is that of DNA-binding transcriptional regulator BolA from Escherichia coli (strain K12).